The sequence spans 205 residues: HTH-type transcriptional repressor KstR2 (205 aa).

In terms of domain architecture, HTH tetR-type spans 10–70 (ASRRDELLQL…EVLRDFLDWL (61 aa)). A DNA-binding region (H-T-H motif) is located at residues 33 to 52 (TVRDIADSAGILSGSLYHHF).

In terms of assembly, homodimer.

In terms of biological role, controls the expression of a small regulon that may play a role in the utilization of cholesterol. This chain is HTH-type transcriptional repressor KstR2 (kstR2), found in Mycolicibacterium smegmatis (strain ATCC 700084 / mc(2)155) (Mycobacterium smegmatis).